A 1107-amino-acid polypeptide reads, in one-letter code: Protein translocase subunit SecA (1107 aa).

Residues Q169, 187 to 191 (GEGKT), and D688 contribute to the ATP site. A compositionally biased stretch (basic and acidic residues) spans 1036–1066 (RHAAEQRTDMSKYRTQKDDIEAQQKAQRDAA). A disordered region spans residues 1036-1107 (RHAAEQRTDM…KFKQCHGRNL (72 aa)). Zn(2+)-binding residues include C1091, C1093, C1102, and H1103. The segment covering 1097–1107 (KKFKQCHGRNL) has biased composition (basic residues).

The protein belongs to the SecA family. Monomer and homodimer. Part of the essential Sec protein translocation apparatus which comprises SecA, SecYEG and auxiliary proteins SecDF. Other proteins may also be involved. Requires Zn(2+) as cofactor.

It is found in the cell inner membrane. It localises to the cytoplasm. It carries out the reaction ATP + H2O + cellular proteinSide 1 = ADP + phosphate + cellular proteinSide 2.. Its function is as follows. Part of the Sec protein translocase complex. Interacts with the SecYEG preprotein conducting channel. Has a central role in coupling the hydrolysis of ATP to the transfer of proteins into and across the cell membrane, serving as an ATP-driven molecular motor driving the stepwise translocation of polypeptide chains across the membrane. The protein is Protein translocase subunit SecA of Porphyromonas gingivalis (strain ATCC BAA-308 / W83).